The sequence spans 251 residues: Zinc import ATP-binding protein ZnuC (251 aa).

The ABC transporter domain maps to 5-220 (VSLENVSVSF…PEFISMFGPR (216 aa)). 37–44 (GPNGAGKS) serves as a coordination point for ATP.

It belongs to the ABC transporter superfamily. Zinc importer (TC 3.A.1.15.5) family. In terms of assembly, the complex is composed of two ATP-binding proteins (ZnuC), two transmembrane proteins (ZnuB) and a solute-binding protein (ZnuA).

The protein resides in the cell inner membrane. The catalysed reaction is Zn(2+)(out) + ATP(in) + H2O(in) = Zn(2+)(in) + ADP(in) + phosphate(in) + H(+)(in). Its function is as follows. Part of the ABC transporter complex ZnuABC involved in zinc import. Responsible for energy coupling to the transport system. This is Zinc import ATP-binding protein ZnuC from Escherichia coli O157:H7.